We begin with the raw amino-acid sequence, 93 residues long: UPF0367 protein ssl1972 (93 aa).

The protein belongs to the UPF0367 family.

In Synechocystis sp. (strain ATCC 27184 / PCC 6803 / Kazusa), this protein is UPF0367 protein ssl1972.